A 196-amino-acid polypeptide reads, in one-letter code: Nucleoid occlusion factor SlmA (196 aa).

The HTH tetR-type domain occupies 7–68 (SNRREEILQA…GLIEFIEEAL (62 aa)). The segment at residues 31–50 (TTAKLAQQVGVSEAALYRHF) is a DNA-binding region (H-T-H motif). Residues 65–142 (EEALMSRINR…QLRQILRERK (78 aa)) adopt a coiled-coil conformation.

The protein belongs to the nucleoid occlusion factor SlmA family. As to quaternary structure, homodimer. Interacts with FtsZ.

Its subcellular location is the cytoplasm. It localises to the nucleoid. Its function is as follows. Required for nucleoid occlusion (NO) phenomenon, which prevents Z-ring formation and cell division over the nucleoid. Acts as a DNA-associated cell division inhibitor that binds simultaneously chromosomal DNA and FtsZ, and disrupts the assembly of FtsZ polymers. SlmA-DNA-binding sequences (SBS) are dispersed on non-Ter regions of the chromosome, preventing FtsZ polymerization at these regions. The polypeptide is Nucleoid occlusion factor SlmA (Vibrio vulnificus (strain CMCP6)).